The primary structure comprises 313 residues: Homoserine O-succinyltransferase (313 aa).

The Acyl-thioester intermediate role is filled by cysteine 142. Substrate contacts are provided by lysine 163 and serine 192. The Proton acceptor role is filled by histidine 235. Glutamate 237 is a catalytic residue. Position 249 (arginine 249) interacts with substrate.

The protein belongs to the MetA family.

The protein localises to the cytoplasm. It catalyses the reaction L-homoserine + succinyl-CoA = O-succinyl-L-homoserine + CoA. The protein operates within amino-acid biosynthesis; L-methionine biosynthesis via de novo pathway; O-succinyl-L-homoserine from L-homoserine: step 1/1. Its function is as follows. Transfers a succinyl group from succinyl-CoA to L-homoserine, forming succinyl-L-homoserine. The sequence is that of Homoserine O-succinyltransferase from Shewanella baltica (strain OS195).